Reading from the N-terminus, the 86-residue chain is Protein IDA-LIKE 1 (86 aa).

A signal peptide spans 1 to 27 (MNLSHKTMFMTLYIVFLLIFGSYNATA).

Expressed in roots.

Its subcellular location is the secreted. It is found in the extracellular space. Functionally, involved in an ethylene-independent separation step of floral abscission. May act with RLK5 and HSL2 as ligand-receptor pairs. This Arabidopsis thaliana (Mouse-ear cress) protein is Protein IDA-LIKE 1 (IDL1).